The following is a 184-amino-acid chain: ATP synthase subunit b, chloroplastic (184 aa).

Residues 27 to 49 (LATNLINLSVVLGVLVFFGKGVL) traverse the membrane as a helical segment.

Belongs to the ATPase B chain family. As to quaternary structure, F-type ATPases have 2 components, F(1) - the catalytic core - and F(0) - the membrane proton channel. F(1) has five subunits: alpha(3), beta(3), gamma(1), delta(1), epsilon(1). F(0) has four main subunits: a(1), b(1), b'(1) and c(10-14). The alpha and beta chains form an alternating ring which encloses part of the gamma chain. F(1) is attached to F(0) by a central stalk formed by the gamma and epsilon chains, while a peripheral stalk is formed by the delta, b and b' chains.

Its subcellular location is the plastid. The protein localises to the chloroplast thylakoid membrane. F(1)F(0) ATP synthase produces ATP from ADP in the presence of a proton or sodium gradient. F-type ATPases consist of two structural domains, F(1) containing the extramembraneous catalytic core and F(0) containing the membrane proton channel, linked together by a central stalk and a peripheral stalk. During catalysis, ATP synthesis in the catalytic domain of F(1) is coupled via a rotary mechanism of the central stalk subunits to proton translocation. Functionally, component of the F(0) channel, it forms part of the peripheral stalk, linking F(1) to F(0). The sequence is that of ATP synthase subunit b, chloroplastic from Cicer arietinum (Chickpea).